A 268-amino-acid polypeptide reads, in one-letter code: Hydroxyacylglutathione hydrolase (268 aa).

7 residues coordinate Zn(2+): H56, H58, D60, H61, H112, D137, and H176. 176 to 178 serves as a coordination point for substrate; it reads HEY.

This sequence belongs to the metallo-beta-lactamase superfamily. Glyoxalase II family. As to quaternary structure, monomer. Zn(2+) is required as a cofactor.

The enzyme catalyses an S-(2-hydroxyacyl)glutathione + H2O = a 2-hydroxy carboxylate + glutathione + H(+). It functions in the pathway secondary metabolite metabolism; methylglyoxal degradation; (R)-lactate from methylglyoxal: step 2/2. In terms of biological role, thiolesterase that catalyzes the hydrolysis of S-D-lactoyl-glutathione to form glutathione and D-lactic acid. The polypeptide is Hydroxyacylglutathione hydrolase (hagh) (Dictyostelium discoideum (Social amoeba)).